A 402-amino-acid chain; its full sequence is Protochlorophyllide reductase B, chloroplastic (402 aa).

Belongs to the short-chain dehydrogenases/reductases (SDR) family. POR subfamily.

The protein localises to the plastid. It is found in the chloroplast. The catalysed reaction is chlorophyllide a + NADP(+) = protochlorophyllide a + NADPH + H(+). It participates in porphyrin-containing compound metabolism; chlorophyll biosynthesis. Phototransformation of protochlorophyllide (Pchlide) to chlorophyllide (Chlide). The protein is Protochlorophyllide reductase B, chloroplastic (PORB) of Oryza sativa subsp. japonica (Rice).